The following is a 310-amino-acid chain: MLKEKKDKEKNIYMIPKILKSSKSKSILKKPKWLKIKLPSNLKKINKIKKILKKNFLHSVCEEANCPNLPECFNNGTATFMILGSICTRKCPFCAVTKGRAQKIDKNEPKKILDIVIKLKLTYVVLTSVARDDLKDGGAKHFSKCIYEIRKKKNIKVEILVPDFRGKEKIALKIFNKFPPDIFNHNIENVPRLYSLIRPGADYIKSLNLLYQFKKICPNIPTKSGLMLGLGEKKKEIISVLKDLKSVGVSIVTIGQYLQPSKNHLLVQKYITPKEFKNFEYIALSLGFSKVFCGPLVRSSYHADRQYLSF.

Positions 61, 66, 72, 87, 91, 94, and 300 each coordinate [4Fe-4S] cluster. Positions phenylalanine 73–serine 289 constitute a Radical SAM core domain.

Belongs to the radical SAM superfamily. Lipoyl synthase family. The cofactor is [4Fe-4S] cluster.

The protein resides in the cytoplasm. The catalysed reaction is [[Fe-S] cluster scaffold protein carrying a second [4Fe-4S](2+) cluster] + N(6)-octanoyl-L-lysyl-[protein] + 2 oxidized [2Fe-2S]-[ferredoxin] + 2 S-adenosyl-L-methionine + 4 H(+) = [[Fe-S] cluster scaffold protein] + N(6)-[(R)-dihydrolipoyl]-L-lysyl-[protein] + 4 Fe(3+) + 2 hydrogen sulfide + 2 5'-deoxyadenosine + 2 L-methionine + 2 reduced [2Fe-2S]-[ferredoxin]. It functions in the pathway protein modification; protein lipoylation via endogenous pathway; protein N(6)-(lipoyl)lysine from octanoyl-[acyl-carrier-protein]: step 2/2. In terms of biological role, catalyzes the radical-mediated insertion of two sulfur atoms into the C-6 and C-8 positions of the octanoyl moiety bound to the lipoyl domains of lipoate-dependent enzymes, thereby converting the octanoylated domains into lipoylated derivatives. The sequence is that of Lipoyl synthase from Buchnera aphidicola subsp. Cinara cedri (strain Cc).